Consider the following 820-residue polypeptide: 1,4-alpha-glucan-branching enzyme, chloroplastic/amyloplastic (820 aa).

Over residues 1-20 the composition is skewed to low complexity; sequence MLCLTSSSSSAPAPLLPSLA. The segment at 1-28 is disordered; sequence MLCLTSSSSSAPAPLLPSLADRPSPGIA. The transit peptide at 1 to 64 directs the protein to the chloroplast; that stretch reads MLCLTSSSSS…SVPATARKNK (64 aa). Positions 153 and 188 each coordinate (1,4-alpha-D-glucosyl)n. The active-site Nucleophile is aspartate 409. Glutamate 464 functions as the Proton donor in the catalytic mechanism.

Belongs to the glycosyl hydrolase 13 family. GlgB subfamily. As to quaternary structure, monomer.

The protein localises to the plastid. It is found in the chloroplast. It localises to the amyloplast. It carries out the reaction Transfers a segment of a (1-&gt;4)-alpha-D-glucan chain to a primary hydroxy group in a similar glucan chain.. The protein operates within glycan biosynthesis; starch biosynthesis. In terms of biological role, catalyzes the formation of the alpha-1,6-glucosidic linkages in starch by scission of a 1,4-alpha-linked oligosaccharide from growing alpha-1,4-glucan chains and the subsequent attachment of the oligosaccharide to the alpha-1,6 position. The protein is 1,4-alpha-glucan-branching enzyme, chloroplastic/amyloplastic (SBE1) of Oryza sativa subsp. japonica (Rice).